The following is a 182-amino-acid chain: UPF0316 protein BCQ_3166 (182 aa).

Helical transmembrane passes span 6-26, 32-52, and 58-78; these read LIFV…ILLV, SAAA…GIVF, and WMNI…GGYI.

This sequence belongs to the UPF0316 family.

Its subcellular location is the cell membrane. The sequence is that of UPF0316 protein BCQ_3166 from Bacillus cereus (strain Q1).